The primary structure comprises 258 residues: L-aspartate dehydrogenase 1 (258 aa).

The NAD(+) site is built by A121 and N181. The active site involves H211.

This sequence belongs to the L-aspartate dehydrogenase family.

It catalyses the reaction L-aspartate + NADP(+) + H2O = oxaloacetate + NH4(+) + NADPH + H(+). The enzyme catalyses L-aspartate + NAD(+) + H2O = oxaloacetate + NH4(+) + NADH + H(+). Its pathway is cofactor biosynthesis; NAD(+) biosynthesis; iminoaspartate from L-aspartate (dehydrogenase route): step 1/1. Functionally, specifically catalyzes the NAD or NADP-dependent dehydrogenation of L-aspartate to iminoaspartate. This Bordetella pertussis (strain Tohama I / ATCC BAA-589 / NCTC 13251) protein is L-aspartate dehydrogenase 1.